The following is a 321-amino-acid chain: MISVNEMGSYVIEEMLDWSEDLKTEVIKLENGATIIDCGIKAEGGYEAGMYLARLCLADLADLKYSTFDLNGIKWPAIQVATDNPVIACMASQYAGWRISVGNYFGMGSGPARALGLKPKELYEEIGYEDDFEAAVLVMESDKLPDEKVVEYIAKHCSVDPENVMIAVAPTASIAGSVQISARVVETGIHKFESIGFDINCIKSGYGIAPIAPIVGNDVQCMGSTNDCVIYCGETNYTVSFEGELAKLEDFVRKVPSTTSDDFGKPFYQTFKAANFDFFKVDAGMFAPARVTVNDLKNKKTISSGGLYPEILLESFGIRKV.

The protein belongs to the MCH family.

It localises to the cytoplasm. It carries out the reaction 5,10-methenyl-5,6,7,8-tetrahydromethanopterin + H2O = N(5)-formyl-5,6,7,8-tetrahydromethanopterin + H(+). It functions in the pathway one-carbon metabolism; methanogenesis from CO(2); 5,10-methenyl-5,6,7,8-tetrahydromethanopterin from CO(2): step 3/3. Catalyzes the reversible interconversion of 5-formyl-H(4)MPT to methenyl-H(4)MPT(+). The chain is Methenyltetrahydromethanopterin cyclohydrolase from Methanosarcina mazei (strain ATCC BAA-159 / DSM 3647 / Goe1 / Go1 / JCM 11833 / OCM 88) (Methanosarcina frisia).